The sequence spans 298 residues: MIINGVHIDETFAEAFPMRATRVIVTAQNLKWAHHAAQAMTGFATSVIACGCEAGIERELDPAETPDGRPGVSALLFAMGGKGLAKQLETRAGQCVLTSPTSALFAGIVEGEQIPLGKNLRYFGDGFQISKRIGGKRYWRIPVMDGEFLCQETTGMIKAVGGGNFLILAESQPQALAACEAAIEAMRRIPNVIMPFPGGVVRSGSKVGSKYKTLPASTNDAFCPTLKGQTRTELSPEIESVMEIVIDGLSDADIAKAMRAGIEAACGLGAANGIRRISAGNYGGKLGPFLFHLREIMA.

This sequence belongs to the FTR family. In terms of assembly, homotetramer.

It localises to the cytoplasm. It carries out the reaction N-formylmethanofuran + 5,6,7,8-tetrahydromethanopterin + H(+) = N(5)-formyl-5,6,7,8-tetrahydromethanopterin + methanofuran. It functions in the pathway one-carbon metabolism; formaldehyde degradation; formate from formaldehyde (H(4)MPT route): step 4/5. Functionally, catalyzes the transfer of a formyl group from 5-formyl tetrahydromethanopterin (5-formyl-H(4)MPT) to methanofuran (MFR) to produce formylmethanofuran (formyl-MFR) and tetrahydromethanopterin (H(4)MPT). The protein is Formylmethanofuran--tetrahydromethanopterin formyltransferase of Methylococcus capsulatus (strain ATCC 33009 / NCIMB 11132 / Bath).